Reading from the N-terminus, the 71-residue chain is Small ribosomal subunit protein bS21 (71 aa).

Basic residues predominate over residues 48–60 (KKAAAVKRYKKKL). The interval 48–71 (KKAAAVKRYKKKLQRESIRTTRMY) is disordered. Residues 61–71 (QRESIRTTRMY) show a composition bias toward basic and acidic residues.

It belongs to the bacterial ribosomal protein bS21 family.

The polypeptide is Small ribosomal subunit protein bS21 (Psychrobacter sp. (strain PRwf-1)).